The sequence spans 208 residues: Large ribosomal subunit protein eL13 (208 aa).

Residues S177 and S180 each carry the phosphoserine modification.

It belongs to the eukaryotic ribosomal protein eL13 family. Component of the large ribosomal subunit (LSU). Mature yeast ribosomes consist of a small (40S) and a large (60S) subunit. The 40S small subunit contains 1 molecule of ribosomal RNA (18S rRNA) and at least 33 different proteins. The large 60S subunit contains 3 rRNA molecules (25S, 5.8S and 5S rRNA) and at least 46 different proteins.

The protein localises to the cytoplasm. In terms of biological role, component of the ribosome, a large ribonucleoprotein complex responsible for the synthesis of proteins in the cell. The small ribosomal subunit (SSU) binds messenger RNAs (mRNAs) and translates the encoded message by selecting cognate aminoacyl-transfer RNA (tRNA) molecules. The large subunit (LSU) contains the ribosomal catalytic site termed the peptidyl transferase center (PTC), which catalyzes the formation of peptide bonds, thereby polymerizing the amino acids delivered by tRNAs into a polypeptide chain. The nascent polypeptides leave the ribosome through a tunnel in the LSU and interact with protein factors that function in enzymatic processing, targeting, and the membrane insertion of nascent chains at the exit of the ribosomal tunnel. This Schizosaccharomyces pombe (strain 972 / ATCC 24843) (Fission yeast) protein is Large ribosomal subunit protein eL13 (rpl13).